The primary structure comprises 357 residues: DNA integrity scanning protein DisA (357 aa).

The DAC domain maps to 8–146; that stretch reads VKSMINILQL…GNLRYTLKDI (139 aa). ATP contacts are provided by residues Gly-75, Leu-93, and 106 to 110; that span reads MRHRT.

The protein belongs to the DisA family. Homooctamer. The cofactor is Mg(2+).

The enzyme catalyses 2 ATP = 3',3'-c-di-AMP + 2 diphosphate. In terms of biological role, participates in a DNA-damage check-point that is active prior to asymmetric division when DNA is damaged. DisA forms globular foci that rapidly scan along the chromosomes during sporulation, searching for lesions. When a lesion is present, DisA pauses at the lesion site. This triggers a cellular response that culminates in a temporary block in sporulation initiation. Also has diadenylate cyclase activity, catalyzing the condensation of 2 ATP molecules into cyclic di-AMP (c-di-AMP). c-di-AMP acts as a signaling molecule that couples DNA integrity with progression of sporulation. The rise in c-di-AMP level generated by DisA while scanning the chromosome, operates as a positive signal that advances sporulation; upon encountering a lesion, the DisA focus arrests at the damaged site and halts c-di-AMP synthesis. This is DNA integrity scanning protein DisA from Bacillus anthracis (strain CDC 684 / NRRL 3495).